Reading from the N-terminus, the 171-residue chain is Peptidyl-prolyl cis-trans isomerase 7 (171 aa).

The PPIase cyclophilin-type domain maps to phenylalanine 7–glutamine 170.

This sequence belongs to the cyclophilin-type PPIase family.

It catalyses the reaction [protein]-peptidylproline (omega=180) = [protein]-peptidylproline (omega=0). Functionally, PPIases accelerate the folding of proteins. It catalyzes the cis-trans isomerization of proline imidic peptide bonds in oligopeptides. The polypeptide is Peptidyl-prolyl cis-trans isomerase 7 (cyn-7) (Caenorhabditis elegans).